Reading from the N-terminus, the 227-residue chain is Mediator of RNA polymerase II transcription subunit 18 (227 aa).

This sequence belongs to the Mediator complex subunit 18 family. Component of the Mediator complex.

It localises to the nucleus. Component of the Mediator complex, a coactivator involved in the regulated transcription of nearly all RNA polymerase II-dependent genes. Mediator functions as a bridge to convey information from gene-specific regulatory proteins to the basal RNA polymerase II transcription machinery. Mediator is recruited to promoters by direct interactions with regulatory proteins and serves as a scaffold for the assembly of a functional preinitiation complex with RNA polymerase II and the general transcription factors. This is Mediator of RNA polymerase II transcription subunit 18 (mdt-18) from Caenorhabditis briggsae.